Reading from the N-terminus, the 507-residue chain is Cytochrome P450 52A7 (507 aa).

The helical transmembrane segment at 6–26 (LHYWYYVLPAFIIFHWIVSAI) threads the bilayer. Cysteine 456 provides a ligand contact to heme.

Belongs to the cytochrome P450 family. Heme is required as a cofactor.

Its subcellular location is the membrane. Functionally, together with an NADPH cytochrome P450 the enzyme system catalyzes the terminal hydroxylation as the first step in the assimilation of alkanes and fatty acids. Preferentially hydroxylates lauric acid. This Candida tropicalis (Yeast) protein is Cytochrome P450 52A7 (CYP52A7).